A 258-amino-acid chain; its full sequence is Type III pantothenate kinase (258 aa).

6-13 (DVGNTNIV) is a binding site for ATP. Substrate is bound by residues tyrosine 100 and 107–110 (GADR). The active-site Proton acceptor is aspartate 109. Aspartate 129 contributes to the K(+) binding site. Threonine 132 contacts ATP. Threonine 184 serves as a coordination point for substrate.

The protein belongs to the type III pantothenate kinase family. As to quaternary structure, homodimer. NH4(+) is required as a cofactor. It depends on K(+) as a cofactor.

It localises to the cytoplasm. The enzyme catalyses (R)-pantothenate + ATP = (R)-4'-phosphopantothenate + ADP + H(+). The protein operates within cofactor biosynthesis; coenzyme A biosynthesis; CoA from (R)-pantothenate: step 1/5. In terms of biological role, catalyzes the phosphorylation of pantothenate (Pan), the first step in CoA biosynthesis. This chain is Type III pantothenate kinase, found in Clostridium botulinum (strain Loch Maree / Type A3).